The sequence spans 419 residues: Testin (419 aa).

A PET domain is found at 92–199 (MILTNPVAAK…GDVKLPSEMN (108 aa)). Disordered stretches follow at residues 133–164 (EKQPVAGSEGAQYRKKQLAKQLPAHDQDPSKC) and 199–222 (NAQGDKVHNPAGDRNTPAAVGSKD). Residues 155–164 (PAHDQDPSKC) show a composition bias toward basic and acidic residues. LIM zinc-binding domains follow at residues 232-295 (YSCY…CDSE), 297-357 (PRCA…NHAV), and 360-419 (QGCH…KMMS).

This sequence belongs to the prickle / espinas / testin family. As to quaternary structure, interacts via LIM domain 1 with ZYX. Interacts (via LIM domain 3) with ENAH and VASP. Interacts with ALKBH4, talin, actin, alpha-actinin, GRIP1 and PXN. Interacts (via LIM domain 2) with ACTL7A (via N-terminus). Heterodimer with ACTL7A; the heterodimer interacts with ENAH to form a heterotrimer.

Its subcellular location is the cytoplasm. It localises to the cell junction. It is found in the focal adhesion. Scaffold protein that may play a role in cell adhesion, cell spreading and in the reorganization of the actin cytoskeleton. Plays a role in the regulation of cell proliferation. May act as a tumor suppressor. In Rattus norvegicus (Rat), this protein is Testin (Tes).